A 149-amino-acid polypeptide reads, in one-letter code: FAD synthase (149 aa).

Residues 15–16 (VF), 20–23 (HVGH), and Asp101 each bind ATP.

Belongs to the archaeal FAD synthase family. In terms of assembly, homodimer. The cofactor is a divalent metal cation.

The enzyme catalyses FMN + ATP + H(+) = FAD + diphosphate. It functions in the pathway cofactor biosynthesis; FAD biosynthesis; FAD from FMN: step 1/1. In terms of biological role, catalyzes the transfer of the AMP portion of ATP to flavin mononucleotide (FMN) to produce flavin adenine dinucleotide (FAD) coenzyme. The polypeptide is FAD synthase (Thermococcus kodakarensis (strain ATCC BAA-918 / JCM 12380 / KOD1) (Pyrococcus kodakaraensis (strain KOD1))).